A 192-amino-acid polypeptide reads, in one-letter code: Peptide deformylase 1 (192 aa).

2 residues coordinate Fe cation: Cys-101 and His-143. Residue Glu-144 is part of the active site. Residue His-147 coordinates Fe cation.

Belongs to the polypeptide deformylase family. It depends on Fe(2+) as a cofactor.

It catalyses the reaction N-terminal N-formyl-L-methionyl-[peptide] + H2O = N-terminal L-methionyl-[peptide] + formate. Functionally, removes the formyl group from the N-terminal Met of newly synthesized proteins. Requires at least a dipeptide for an efficient rate of reaction. N-terminal L-methionine is a prerequisite for activity but the enzyme has broad specificity at other positions. This Prochlorococcus marinus (strain MIT 9313) protein is Peptide deformylase 1.